A 143-amino-acid polypeptide reads, in one-letter code: Monothiol glutaredoxin-5, mitochondrial (143 aa).

A mitochondrion-targeting transit peptide spans 1-28 (MFGRISTRALLRPAFTHRIPSVSLSRFL). The 106-residue stretch at 33–138 (KQAIESAIES…KLLEDADALV (106 aa)) folds into the Glutaredoxin domain. Lysine 50 serves as a coordination point for glutathione. Cysteine 58 contributes to the [2Fe-2S] cluster binding site. Residues 90–94 (REGVK), isoleucine 102, and 115–116 (CD) each bind glutathione.

It belongs to the glutaredoxin family. Monothiol subfamily. Homodimer.

Its subcellular location is the mitochondrion matrix. Monothiol glutaredoxin involved in mitochondrial iron-sulfur (Fe/S) cluster transfer. Receives iron-sulfur clusters from scaffold protein ISU1 and mediates their transfer to apoproteins, to the 4Fe/FS cluster biosynthesis machinery, or export from mitochondrion. In Lachancea kluyveri (Yeast), this protein is Monothiol glutaredoxin-5, mitochondrial (GRX5).